The chain runs to 206 residues: Histidine biosynthesis bifunctional protein HisIE (206 aa).

The segment at 1 to 117 (MCNEPATSDV…SCFPAAPGQF (117 aa)) is phosphoribosyl-AMP cyclohydrolase. A phosphoribosyl-ATP pyrophosphohydrolase region spans residues 118–206 (LGALDALVAE…AVTVLEARHR (89 aa)).

It in the N-terminal section; belongs to the PRA-CH family. The protein in the C-terminal section; belongs to the PRA-PH family.

Its subcellular location is the cytoplasm. The enzyme catalyses 1-(5-phospho-beta-D-ribosyl)-ATP + H2O = 1-(5-phospho-beta-D-ribosyl)-5'-AMP + diphosphate + H(+). It catalyses the reaction 1-(5-phospho-beta-D-ribosyl)-5'-AMP + H2O = 1-(5-phospho-beta-D-ribosyl)-5-[(5-phospho-beta-D-ribosylamino)methylideneamino]imidazole-4-carboxamide. It functions in the pathway amino-acid biosynthesis; L-histidine biosynthesis; L-histidine from 5-phospho-alpha-D-ribose 1-diphosphate: step 2/9. It participates in amino-acid biosynthesis; L-histidine biosynthesis; L-histidine from 5-phospho-alpha-D-ribose 1-diphosphate: step 3/9. The sequence is that of Histidine biosynthesis bifunctional protein HisIE (hisI) from Xylella fastidiosa (strain 9a5c).